Consider the following 154-residue polypeptide: UPF0225 protein YPDSF_0962 (154 aa).

It belongs to the UPF0225 family.

The protein is UPF0225 protein YPDSF_0962 of Yersinia pestis (strain Pestoides F).